The primary structure comprises 119 residues: Large ribosomal subunit protein bL20 (119 aa).

Belongs to the bacterial ribosomal protein bL20 family.

Functionally, binds directly to 23S ribosomal RNA and is necessary for the in vitro assembly process of the 50S ribosomal subunit. It is not involved in the protein synthesizing functions of that subunit. This Rhodopseudomonas palustris (strain HaA2) protein is Large ribosomal subunit protein bL20.